A 382-amino-acid polypeptide reads, in one-letter code: Lipid-A-disaccharide synthase (382 aa).

Belongs to the LpxB family.

The enzyme catalyses a lipid X + a UDP-2-N,3-O-bis[(3R)-3-hydroxyacyl]-alpha-D-glucosamine = a lipid A disaccharide + UDP + H(+). It functions in the pathway bacterial outer membrane biogenesis; LPS lipid A biosynthesis. Its function is as follows. Condensation of UDP-2,3-diacylglucosamine and 2,3-diacylglucosamine-1-phosphate to form lipid A disaccharide, a precursor of lipid A, a phosphorylated glycolipid that anchors the lipopolysaccharide to the outer membrane of the cell. In Koribacter versatilis (strain Ellin345), this protein is Lipid-A-disaccharide synthase.